A 30-amino-acid polypeptide reads, in one-letter code: GLPVCGETCFGGTCNTPGCSCETWPVCSRN.

The cyclopeptide (Gly-Asn) cross-link spans 1–30 (GLPVCGETCFGGTCNTPGCSCETWPVCSRN). 3 cysteine pairs are disulfide-bonded: cysteine 5–cysteine 19, cysteine 9–cysteine 21, and cysteine 14–cysteine 27.

This is a cyclic peptide.

Probably participates in a plant defense mechanism. This Viola arvensis (European field pansy) protein is Varv peptide H.